The sequence spans 940 residues: Isoleucine--tRNA ligase (940 aa).

A 'HIGH' region motif is present at residues 58 to 68 (PYANGSIHIGH). An L-isoleucyl-5'-AMP-binding site is contributed by Glu-564. A 'KMSKS' region motif is present at residues 605–609 (KMSKS). ATP is bound at residue Lys-608. Zn(2+)-binding residues include Cys-903, Cys-906, Cys-923, and Cys-926.

It belongs to the class-I aminoacyl-tRNA synthetase family. IleS type 1 subfamily. Monomer. Zn(2+) serves as cofactor.

It localises to the cytoplasm. It carries out the reaction tRNA(Ile) + L-isoleucine + ATP = L-isoleucyl-tRNA(Ile) + AMP + diphosphate. Functionally, catalyzes the attachment of isoleucine to tRNA(Ile). As IleRS can inadvertently accommodate and process structurally similar amino acids such as valine, to avoid such errors it has two additional distinct tRNA(Ile)-dependent editing activities. One activity is designated as 'pretransfer' editing and involves the hydrolysis of activated Val-AMP. The other activity is designated 'posttransfer' editing and involves deacylation of mischarged Val-tRNA(Ile). This is Isoleucine--tRNA ligase from Shewanella sp. (strain ANA-3).